Reading from the N-terminus, the 827-residue chain is Discs large homolog 1-like protein (827 aa).

Disordered stretches follow at residues His38–Pro61 and Ser102–Pro133. Over residues Gly44–Asp56 the composition is skewed to polar residues. 3 consecutive PDZ domains span residues Glu159–Lys246, Glu254–Asn341, and Lys403–Pro484. The SH3 domain occupies Lys518–Glu588. A disordered region spans residues Val595–Gly618. The region spanning Ser637–Glu812 is the Guanylate kinase-like domain.

This sequence belongs to the MAGUK family.

It is found in the membrane. Its function is as follows. May play a role in synapse assembly and function. The chain is Discs large homolog 1-like protein (dlg1l) from Danio rerio (Zebrafish).